Consider the following 272-residue polypeptide: Phosphate import ATP-binding protein PstB (272 aa).

An ABC transporter domain is found at 26–267; sequence IVVKNWNLYY…PQVKRTEDYI (242 aa). ATP is bound at residue 58-65; that stretch reads GPSGCGKS.

Belongs to the ABC transporter superfamily. Phosphate importer (TC 3.A.1.7) family. The complex is composed of two ATP-binding proteins (PstB), two transmembrane proteins (PstC and PstA) and a solute-binding protein (PstS).

It localises to the cell inner membrane. It catalyses the reaction phosphate(out) + ATP + H2O = ADP + 2 phosphate(in) + H(+). Its function is as follows. Part of the ABC transporter complex PstSACB involved in phosphate import. Responsible for energy coupling to the transport system. This chain is Phosphate import ATP-binding protein PstB, found in Hydrogenovibrio crunogenus (strain DSM 25203 / XCL-2) (Thiomicrospira crunogena).